We begin with the raw amino-acid sequence, 204 residues long: uncharacterized protein (204 aa).

Residues 160–180 (GLTVAAIASVVVAGAVTYLVV) traverse the membrane as a helical segment.

The protein to M.pneumoniae MPN_373 C-terminal region.

It localises to the cell membrane. This is an uncharacterized protein from Mycoplasma pneumoniae (strain ATCC 29342 / M129 / Subtype 1) (Mycoplasmoides pneumoniae).